Consider the following 235-residue polypeptide: Large ribosomal subunit protein uL1 (235 aa).

Belongs to the universal ribosomal protein uL1 family. In terms of assembly, part of the 50S ribosomal subunit.

In terms of biological role, binds directly to 23S rRNA. The L1 stalk is quite mobile in the ribosome, and is involved in E site tRNA release. Functionally, protein L1 is also a translational repressor protein, it controls the translation of the L11 operon by binding to its mRNA. The protein is Large ribosomal subunit protein uL1 of Prochlorococcus marinus (strain MIT 9515).